The following is a 198-amino-acid chain: Recombination protein RecR (198 aa).

The C4-type zinc finger occupies 57-72 (CEKCNTFTEAQICEVC). The 96-residue stretch at 80–175 (TLLCVVETPA…AVTRLARGVP (96 aa)) folds into the Toprim domain.

It belongs to the RecR family.

Its function is as follows. May play a role in DNA repair. It seems to be involved in an RecBC-independent recombinational process of DNA repair. It may act with RecF and RecO. In Burkholderia ambifaria (strain MC40-6), this protein is Recombination protein RecR.